The sequence spans 1398 residues: DNA-directed RNA polymerase subunit beta' (1398 aa).

Residues Cys70, Cys72, Cys85, and Cys88 each coordinate Zn(2+). Asp460, Asp462, and Asp464 together coordinate Mg(2+). 4 residues coordinate Zn(2+): Cys814, Cys888, Cys895, and Cys898.

Belongs to the RNA polymerase beta' chain family. As to quaternary structure, the RNAP catalytic core consists of 2 alpha, 1 beta, 1 beta' and 1 omega subunit. When a sigma factor is associated with the core the holoenzyme is formed, which can initiate transcription. Mg(2+) serves as cofactor. The cofactor is Zn(2+).

It catalyses the reaction RNA(n) + a ribonucleoside 5'-triphosphate = RNA(n+1) + diphosphate. DNA-dependent RNA polymerase catalyzes the transcription of DNA into RNA using the four ribonucleoside triphosphates as substrates. The chain is DNA-directed RNA polymerase subunit beta' from Pseudomonas putida (Arthrobacter siderocapsulatus).